A 335-amino-acid chain; its full sequence is Glycerol-3-phosphate dehydrogenase [NAD(P)+] (335 aa).

NADPH is bound by residues serine 10, phenylalanine 11, arginine 31, and lysine 105. Sn-glycerol 3-phosphate contacts are provided by lysine 105, glycine 136, and serine 138. Alanine 140 provides a ligand contact to NADPH. Lysine 191, aspartate 244, serine 254, arginine 255, and asparagine 256 together coordinate sn-glycerol 3-phosphate. Lysine 191 serves as the catalytic Proton acceptor. Position 255 (arginine 255) interacts with NADPH. 2 residues coordinate NADPH: valine 279 and glutamate 281.

The protein belongs to the NAD-dependent glycerol-3-phosphate dehydrogenase family.

It is found in the cytoplasm. The catalysed reaction is sn-glycerol 3-phosphate + NAD(+) = dihydroxyacetone phosphate + NADH + H(+). It catalyses the reaction sn-glycerol 3-phosphate + NADP(+) = dihydroxyacetone phosphate + NADPH + H(+). It participates in membrane lipid metabolism; glycerophospholipid metabolism. In terms of biological role, catalyzes the reduction of the glycolytic intermediate dihydroxyacetone phosphate (DHAP) to sn-glycerol 3-phosphate (G3P), the key precursor for phospholipid synthesis. This is Glycerol-3-phosphate dehydrogenase [NAD(P)+] from Leptospira borgpetersenii serovar Hardjo-bovis (strain L550).